Here is a 62-residue protein sequence, read N- to C-terminus: Mu-conotoxin Lt5d (62 aa).

The first 22 residues, 1-22, serve as a signal peptide directing secretion; the sequence is MRCLPVFIILLLLIPSAPSVDA. Positions 23-48 are excised as a propeptide; it reads QPTTKDDVPLASLHDNAKRALQMFWN.

The protein belongs to the conotoxin T superfamily. In terms of processing, contains 2 disulfide bonds that can be either 'C1-C3, C2-C4' or 'C1-C4, C2-C3', since these disulfide connectivities have been observed for conotoxins with cysteine framework V (for examples, see AC P0DQQ7 and AC P81755). In terms of tissue distribution, expressed by the venom duct.

Its subcellular location is the secreted. Its function is as follows. Mu-conotoxins block voltage-gated sodium channels (Nav). This toxin inhibits tetrodotoxin(TTX)-sensitive sodium channels, but does not affect TTX-resistant sodium channels. Reduces the amplitude of currents without changing the activation and inactivation kinetics of currents. The protein is Mu-conotoxin Lt5d of Conus litteratus (Lettered cone).